We begin with the raw amino-acid sequence, 318 residues long: UDP-N-acetylenolpyruvoylglucosamine reductase (318 aa).

Residues 38-204 (IGGICPVVVE…LGIEILLKEG (167 aa)) form the FAD-binding PCMH-type domain. Arginine 182 is a catalytic residue. The disordered stretch occupies residues 212–232 (SLKDKRDRRNSSQPENKKSAG). Positions 213 to 229 (LKDKRDRRNSSQPENKK) are enriched in basic and acidic residues. Serine 233 (proton donor) is an active-site residue. Residue glutamate 310 is part of the active site.

It belongs to the MurB family. FAD serves as cofactor.

Its subcellular location is the cytoplasm. The catalysed reaction is UDP-N-acetyl-alpha-D-muramate + NADP(+) = UDP-N-acetyl-3-O-(1-carboxyvinyl)-alpha-D-glucosamine + NADPH + H(+). It functions in the pathway cell wall biogenesis; peptidoglycan biosynthesis. Functionally, cell wall formation. The polypeptide is UDP-N-acetylenolpyruvoylglucosamine reductase (Leptospira borgpetersenii serovar Hardjo-bovis (strain L550)).